Consider the following 129-residue polypeptide: Iron-sulfur cluster assembly 1 homolog, mitochondrial (129 aa).

The transit peptide at 1–12 (MSASLVRATVRA) directs the protein to the mitochondrion. Residues Cys-57, Cys-121, and Cys-123 each coordinate Fe cation.

Belongs to the HesB/IscA family. Interacts with CRY2, but not with CRY1 (in vitro).

It is found in the mitochondrion. In terms of biological role, involved in the maturation of mitochondrial 4Fe-4S proteins functioning late in the iron-sulfur cluster assembly pathway. Probably involved in the binding of an intermediate of Fe/S cluster assembly. The polypeptide is Iron-sulfur cluster assembly 1 homolog, mitochondrial (Isca1) (Rattus norvegicus (Rat)).